We begin with the raw amino-acid sequence, 285 residues long: 4-hydroxybenzoate octaprenyltransferase (285 aa).

7 helical membrane passes run 33–53 (FLAA…LGVV), 93–113 (LILF…MNTL), 134–154 (ITYL…PMAY), 166–186 (WLLF…YAMV), 209–229 (LMIG…GIQL), 233–253 (SLYN…QWLI), and 265–285 (FLNN…SVLI).

Belongs to the UbiA prenyltransferase family. It depends on Mg(2+) as a cofactor.

Its subcellular location is the cell inner membrane. The enzyme catalyses all-trans-octaprenyl diphosphate + 4-hydroxybenzoate = 4-hydroxy-3-(all-trans-octaprenyl)benzoate + diphosphate. It participates in cofactor biosynthesis; ubiquinone biosynthesis. Its function is as follows. Catalyzes the prenylation of para-hydroxybenzoate (PHB) with an all-trans polyprenyl group. Mediates the second step in the final reaction sequence of ubiquinone-8 (UQ-8) biosynthesis, which is the condensation of the polyisoprenoid side chain with PHB, generating the first membrane-bound Q intermediate 3-octaprenyl-4-hydroxybenzoate. This is 4-hydroxybenzoate octaprenyltransferase from Aliivibrio salmonicida (strain LFI1238) (Vibrio salmonicida (strain LFI1238)).